An 89-amino-acid polypeptide reads, in one-letter code: UPF0223 protein BPUM_1362 (89 aa).

The protein belongs to the UPF0223 family.

The chain is UPF0223 protein BPUM_1362 from Bacillus pumilus (strain SAFR-032).